A 795-amino-acid polypeptide reads, in one-letter code: TBC1 domain family member 5 (795 aa).

Basic and acidic residues predominate over residues 1–13; it reads MYHSLSETRHPLQ. The disordered stretch occupies residues 1 to 49; the sequence is MYHSLSETRHPLQPEEQEVGIDPLSSYSNKSGGDSNKNGRRTSSTLDSE. The segment covering 25-49 has biased composition (polar residues); the sequence is SSYSNKSGGDSNKNGRRTSSTLDSE. Residue threonine 42 is modified to Phosphothreonine. Phosphoserine is present on residues serine 43 and serine 44. Residues 56 to 64 form a required for interaction with retromer; involved in interaction with ATG8 family proteins region; sequence RKEWEELFV. The LIR 1 signature appears at 57 to 62; that stretch reads KEWEEL. The 279-residue stretch at 81–359 folds into the Rab-GAP TBC domain; that stretch reads LRSSRFRSIC…VVWDALFADG (279 aa). Serine 460 bears the Phosphoserine mark. The disordered stretch occupies residues 475–564; sequence PGSAGGPVPG…PPSSATKKDS (90 aa). Low complexity predominate over residues 484–496; that stretch reads GGNSSSSSSVVIP. A phosphoserine mark is found at serine 522, serine 539, serine 541, serine 544, serine 554, serine 570, serine 584, and serine 730. A compositionally biased stretch (polar residues) spans 523–542; the sequence is MPVQLNKGLSSKNISSSPSV. The span at 554-564 shows a compositional bias: polar residues; the sequence is SPPSSATKKDS. Positions 674–795 are disordered; sequence HYCSSGQGQG…GFTIVSPLDI (122 aa). Over residues 727–748 the composition is skewed to polar residues; it reads ARGSFSGQAQPLRTLRSTSGKS. Residues 765 to 776 are compositionally biased toward low complexity; that stretch reads PASASSSNPSSS. The short motif at 785-789 is the LIR 2 element; it reads SGFTI. The tract at residues 786 to 791 is required for interaction with ATG8 family proteins; that stretch reads GFTIVS. Serine 791 carries the post-translational modification Phosphoserine.

As to quaternary structure, interacts with MAP1LC3A, MAP1LC3B, MAP1LC3C, GABARAP, GABARAPL1, GABARAPL2. Interacts with VPS29 and VPS35; indicative for an association with retromer CSC subcomplex. MAP1LC3A and VPS29 compete for binding to TBC1D5. Interacts with AP2M1; indicative for an association with the AP2 complex. Interacts with ULK1 and ATG13 (phosphorylated); indicative for an association with the activated ULK1-ATG13-FIP200 complex. Interacts with ATG9A; the interactions seems to be restricted to the AP2-clathrin-associated fraction of ATG9A.

It localises to the endosome membrane. The protein localises to the cytoplasmic vesicle. Its subcellular location is the autophagosome. Functionally, may act as a GTPase-activating protein (GAP) for Rab family protein(s). May act as a GAP for RAB7A. Can displace RAB7A and retromer CSC subcomplex from the endosomal membrane to the cytosol; at least retromer displacement seems to require its catalytic activity. Required for retrograde transport of cargo proteins from endosomes to the trans-Golgi network (TGN); the function seems to require its catalytic activity. Involved in regulation of autophagy. May act as a molecular switch between endosomal and autophagosomal transport and is involved in reprogramming vesicle trafficking upon autophagy induction. Involved in the trafficking of ATG9A upon activation of autophagy. May regulate the recruitment of ATG9A-AP2-containing vesicles to autophagic membranes. This chain is TBC1 domain family member 5 (TBC1D5), found in Homo sapiens (Human).